We begin with the raw amino-acid sequence, 230 residues long: Ubiquitin carboxyl-terminal hydrolase isozyme L3 (230 aa).

Residues 5 to 229 (RWLPLEANPE…LRFNAIALSA (225 aa)) form the UCH catalytic domain. The interval 8–13 (PLEANP) is interaction with ubiquitin. The active-site Nucleophile is Cys95. Residue Ser130 is modified to Phosphoserine. An interaction with ubiquitin. Crossover loop which restricts access of large ubiquitin adducts to the active site region spans residues 152 to 159 (AHEGQTEA). His169 serves as the catalytic Proton donor. The segment at 219–224 (ELRFNA) is interaction with ubiquitin.

This sequence belongs to the peptidase C12 family. In terms of assembly, preferentially binds diubiquitin; the interaction does not hydrolyze diubiquitin but, in vitro, inhibits the hydrolyzing activity on other substrates. As to expression, highly expressed in heart, skeletal muscle, and testis.

The protein localises to the cytoplasm. It catalyses the reaction Thiol-dependent hydrolysis of ester, thioester, amide, peptide and isopeptide bonds formed by the C-terminal Gly of ubiquitin (a 76-residue protein attached to proteins as an intracellular targeting signal).. Inhibited by monoubiquitin and diubiquitin. Its function is as follows. Deubiquitinating enzyme (DUB) that controls levels of cellular ubiquitin through processing of ubiquitin precursors and ubiquitinated proteins. Thiol protease that recognizes and hydrolyzes a peptide bond at the C-terminal glycine of either ubiquitin or NEDD8. Has a 10-fold preference for Arg and Lys at position P3'', and exhibits a preference towards 'Lys-48'-linked ubiquitin chains. Deubiquitinates ENAC in apical compartments, thereby regulating apical membrane recycling. Indirectly increases the phosphorylation of IGFIR, AKT and FOXO1 and promotes insulin-signaling and insulin-induced adipogenesis. Required for stress-response retinal, skeletal muscle and germ cell maintenance. May be involved in working memory. Can hydrolyze UBB(+1), a mutated form of ubiquitin which is not effectively degraded by the proteasome and is associated with neurogenerative disorders. The polypeptide is Ubiquitin carboxyl-terminal hydrolase isozyme L3 (UCHL3) (Homo sapiens (Human)).